We begin with the raw amino-acid sequence, 376 residues long: MARVEL domain-containing protein 3 (376 aa).

Residues 1-95 (MKNTSGHREP…EKSRQSRARP (95 aa)) show a composition bias toward basic and acidic residues. The disordered stretch occupies residues 1 to 134 (MKNTSGHREP…GRRGLESERA (134 aa)). The Cytoplasmic portion of the chain corresponds to 1–173 (MKNTSGHREP…HKCRYLCTGR (173 aa)). The 194-residue stretch at 168–361 (YLCTGRACWQ…GAVLAFRGYR (194 aa)) folds into the MARVEL domain. The helical transmembrane segment at 174–194 (ACWQMLKALLNLLILACSSVS) threads the bilayer. Topologically, residues 195-247 (YNSTGGYTGITSLGGIYYYQYGGAYSGFDGADGERAQQLDVQFYQLKLPTVTA) are extracellular. Residues 248–268 (AMAYSGALMTFSCLTLLAGAL) form a helical membrane-spanning segment. Topologically, residues 269 to 275 (RVPWHCP) are cytoplasmic. The chain crosses the membrane as a helical span at residues 276 to 296 (LWLVIEGLMDALIAGAYVPGL). Topologically, residues 297 to 335 (YFFFQHLSAAYSSDVCKERETLYQSKGYSGFNCGVHGGD) are extracellular. The chain crosses the membrane as a helical span at residues 336 to 356 (IGAGVFAAMAIGVFAVGAVLA). The Cytoplasmic segment spans residues 357-376 (FRGYRKVKKLKEKPTEMLEF).

In terms of tissue distribution, widely expressed with highest levels in small intestine, colon, stomach and lung. Liver expresses only isoform 2.

It localises to the membrane. Its subcellular location is the cell junction. It is found in the tight junction. In terms of biological role, as a component of tight junctions, plays a role in paracellular ion conductivity. The polypeptide is MARVEL domain-containing protein 3 (Marveld3) (Mus musculus (Mouse)).